A 394-amino-acid polypeptide reads, in one-letter code: Elongation factor Tu (394 aa).

Residues 10–204 enclose the tr-type G domain; the sequence is KPHINVGTIG…FLDTYIPEPK (195 aa). Positions 19-26 are G1; the sequence is GHVDHGKT. 19 to 26 contacts GTP; it reads GHVDHGKT. A Mg(2+)-binding site is contributed by Thr-26. Residues 60 to 64 form a G2 region; it reads GITIN. Residues 81–84 form a G3 region; sequence DCPG. Residues 81-85 and 136-139 each bind GTP; these read DCPGH and NKCD. The interval 136–139 is G4; sequence NKCD. A G5 region spans residues 174–176; sequence SAL.

The protein belongs to the TRAFAC class translation factor GTPase superfamily. Classic translation factor GTPase family. EF-Tu/EF-1A subfamily. In terms of assembly, monomer.

It localises to the cytoplasm. The catalysed reaction is GTP + H2O = GDP + phosphate + H(+). Its function is as follows. GTP hydrolase that promotes the GTP-dependent binding of aminoacyl-tRNA to the A-site of ribosomes during protein biosynthesis. The sequence is that of Elongation factor Tu from Buchnera aphidicola subsp. Schizaphis graminum (strain Sg).